The sequence spans 753 residues: Nigerose phosphorylase (753 aa).

348 to 349 (WD) is a substrate binding site. The active-site Proton donor is Glu-490. 604 to 605 (KQ) is a substrate binding site.

Belongs to the glycosyl hydrolase 65 family. In terms of assembly, homodimer.

Its subcellular location is the cytoplasm. The catalysed reaction is nigerose + phosphate = beta-D-glucose 1-phosphate + D-glucose. Does not require divalent metal ions. Its function is as follows. Catalyzes the reversible phosphorolysis of nigerose. Also shows a weak activity on kojibiose. This is Nigerose phosphorylase from Lachnoclostridium phytofermentans (strain ATCC 700394 / DSM 18823 / ISDg) (Clostridium phytofermentans).